Reading from the N-terminus, the 223-residue chain is Sigma non-opioid intracellular receptor 1 (223 aa).

Topologically, residues 1-9 (MQWAVGRRW) are lumenal. The segment at 2–8 (QWAVGRR) is targeting to endoplasmic reticulum-associated lipid droplets. The helical transmembrane segment at 10-30 (AWAALLLAVAAVLTQVVWLWL) threads the bilayer. Residues 31–223 (GTQSFVFQRE…LTTYLFGQDP (193 aa)) are Cytoplasmic-facing. An important for ligand-binding region spans residues 99–106 (SLSEYVLL). The C-terminal hydrophobic region stretch occupies residues 177–223 (VIPSTLAFALADTVFSTQDFLTLFYTLRSYARGLRLELTTYLFGQDP).

Belongs to the ERG2 family. As to quaternary structure, homotrimer. Forms a ternary complex with ANK2 and ITPR3. The complex is disrupted by agonists. Interacts with KCNA4. Interacts with KCNA2; cocaine consumption leads to increased interaction. Interacts with RNF112 in an oxidative stress-regulated manner. As to expression, widely expressed with higher expression in liver, colon, prostate, placenta, small intestine, heart and pancreas. Expressed in the retina by retinal pigment epithelial cells. Expressed in alpha-motor neurons.

Its subcellular location is the nucleus inner membrane. It localises to the nucleus outer membrane. The protein resides in the nucleus envelope. The protein localises to the cytoplasmic vesicle. It is found in the endoplasmic reticulum membrane. Its subcellular location is the membrane. It localises to the lipid droplet. The protein resides in the cell junction. The protein localises to the cell membrane. It is found in the cell projection. Its subcellular location is the growth cone. It localises to the postsynaptic density membrane. Its function is as follows. Functions in lipid transport from the endoplasmic reticulum and is involved in a wide array of cellular functions probably through regulation of the biogenesis of lipid microdomains at the plasma membrane. Involved in the regulation of different receptors it plays a role in BDNF signaling and EGF signaling. Also regulates ion channels like the potassium channel and could modulate neurotransmitter release. Plays a role in calcium signaling through modulation together with ANK2 of the ITP3R-dependent calcium efflux at the endoplasmic reticulum. Plays a role in several other cell functions including proliferation, survival and death. Originally identified for its ability to bind various psychoactive drugs it is involved in learning processes, memory and mood alteration. Necessary for proper mitochondrial axonal transport in motor neurons, in particular the retrograde movement of mitochondria. Plays a role in protecting cells against oxidative stress-induced cell death via its interaction with RNF112. This is Sigma non-opioid intracellular receptor 1 (SIGMAR1) from Homo sapiens (Human).